The chain runs to 90 residues: Small ribosomal subunit protein bS16 (90 aa).

It belongs to the bacterial ribosomal protein bS16 family.

The sequence is that of Small ribosomal subunit protein bS16 from Brevibacillus brevis (strain 47 / JCM 6285 / NBRC 100599).